A 148-amino-acid polypeptide reads, in one-letter code: 3-dehydroquinate dehydratase (148 aa).

Catalysis depends on Tyr-23, which acts as the Proton acceptor. Asn-75, His-81, and Asp-88 together coordinate substrate. His-101 serves as the catalytic Proton donor. Substrate is bound by residues 102–103 (LS) and Arg-112.

This sequence belongs to the type-II 3-dehydroquinase family. In terms of assembly, homododecamer.

The catalysed reaction is 3-dehydroquinate = 3-dehydroshikimate + H2O. Its pathway is metabolic intermediate biosynthesis; chorismate biosynthesis; chorismate from D-erythrose 4-phosphate and phosphoenolpyruvate: step 3/7. Its function is as follows. Catalyzes a trans-dehydration via an enolate intermediate. This chain is 3-dehydroquinate dehydratase, found in Halorhodospira halophila (strain DSM 244 / SL1) (Ectothiorhodospira halophila (strain DSM 244 / SL1)).